A 384-amino-acid polypeptide reads, in one-letter code: Sensor-like histidine kinase SenX3 (384 aa).

The Histidine kinase domain maps to 153-369; the sequence is NVSHELKTPV…TFTLSIPEYP (217 aa). Histidine 156 is modified (phosphohistidine; by autocatalysis). The tract at residues 360–384 is disordered; sequence TFTLSIPEYPDPESHSDEREDQRER. Over residues 371–384 the composition is skewed to basic and acidic residues; it reads PESHSDEREDQRER.

Autophosphorylated.

The protein localises to the cell membrane. The enzyme catalyses ATP + protein L-histidine = ADP + protein N-phospho-L-histidine.. Member of the two-component regulatory system SenX3/RegX3 involved in stress response. The system is involved in phosphate starvation response. Probably exhibits a dual role as a phosphatase or a phosphodonor for the response regulator RegX3, depending upon phosphate availability. When environmental phosphate is abundant, SenX3 is required to maintain RegX3 in an unphosphorylated state, where it is unable to bind target DNA. Under conditions of phosphate limitation, SenX3 autophosphorylates and then transfers the phosphate group to RegX3. Probably does not itself sense phosphate concentrations, which may be relayed to SenX3 by the PstSCAB phosphate transporter system. In Mycolicibacterium smegmatis (strain ATCC 700084 / mc(2)155) (Mycobacterium smegmatis), this protein is Sensor-like histidine kinase SenX3.